Consider the following 313-residue polypeptide: Ribosomal RNA small subunit methyltransferase H (313 aa).

S-adenosyl-L-methionine contacts are provided by residues 35–37 (GGH), D55, F79, D101, and Q108.

Belongs to the methyltransferase superfamily. RsmH family.

It is found in the cytoplasm. It catalyses the reaction cytidine(1402) in 16S rRNA + S-adenosyl-L-methionine = N(4)-methylcytidine(1402) in 16S rRNA + S-adenosyl-L-homocysteine + H(+). In terms of biological role, specifically methylates the N4 position of cytidine in position 1402 (C1402) of 16S rRNA. The polypeptide is Ribosomal RNA small subunit methyltransferase H (Shigella flexneri serotype 5b (strain 8401)).